We begin with the raw amino-acid sequence, 340 residues long: Putative UPF0607 protein ENSP00000332738 (340 aa).

Basic and acidic residues predominate over residues 75-90 (VRAEEPKEATEVKDQV). Disordered regions lie at residues 75-130 (VRAE…NPRP) and 215-281 (GLLM…KLPC). The span at 91 to 126 (ETQGQEDNKTGPCSNGKAASTSRPLETQGNLTSSWY) shows a compositional bias: polar residues. The segment covering 228-241 (PAALRSSRSSPPRA) has biased composition (low complexity). Residues 242–251 (AGHRPRKRKL) show a composition bias toward basic residues. Residues 254–266 (PPLQLQQTPPLQL) show a composition bias toward low complexity.

This sequence belongs to the UPF0607 family.

The sequence is that of Putative UPF0607 protein ENSP00000332738 from Homo sapiens (Human).